A 202-amino-acid polypeptide reads, in one-letter code: uncharacterized protein (202 aa).

This sequence belongs to the dienelactone hydrolase family.

This is an uncharacterized protein from Bacillus subtilis (strain 168).